A 72-amino-acid chain; its full sequence is Translational regulator CsrA (72 aa).

It belongs to the CsrA/RsmA family. Homodimer; the beta-strands of each monomer intercalate to form a hydrophobic core, while the alpha-helices form wings that extend away from the core.

The protein resides in the cytoplasm. In terms of biological role, a translational regulator that binds mRNA to regulate translation initiation and/or mRNA stability. Usually binds in the 5'-UTR at or near the Shine-Dalgarno sequence preventing ribosome-binding, thus repressing translation. Its main target seems to be the major flagellin gene, while its function is anatagonized by FliW. In Clostridium botulinum (strain 657 / Type Ba4), this protein is Translational regulator CsrA.